Here is a 357-residue protein sequence, read N- to C-terminus: MGDQWGDAVFAARRRGDDTTREAAFTYTNSNNTKDPFEGPNYHIAPRWVYNLATCWMFFVVVASTVTNGLVLVASAKFKKLRHPLNWILVNLAIADLLETLLASTISVCNQFFGYFILGHPMCVFEGFTVATCGIAGLWSLTVISWERWVVVCKPFGNVKFDGKMATAGIVFTWVWSAVWCAPPIFGWSRYWPHGLKTSCGPDVFSGSEDPGVQSYMIVLMITCCFIPLGIIILCYIAVWWAIRTVAQQQKDSESTQKAEKEVSRMVVVMIMAYCFCWGPYTFFACFAAANPGYAFHPLAAAMPAYFAKSATIYNPVIYVFMNRQFRVCIMQLFGKKVDDGSEVSTSKTEVSSVAPA.

At 1–49 (MGDQWGDAVFAARRRGDDTTREAAFTYTNSNNTKDPFEGPNYHIAPRWV) the chain is on the extracellular side. An N-linked (GlcNAc...) asparagine glycan is attached at Asn31. Residues 50–74 (YNLATCWMFFVVVASTVTNGLVLVA) traverse the membrane as a helical segment. The Cytoplasmic portion of the chain corresponds to 75 to 86 (SAKFKKLRHPLN). Residues 87 to 112 (WILVNLAIADLLETLLASTISVCNQF) form a helical membrane-spanning segment. At 113–126 (FGYFILGHPMCVFE) the chain is on the extracellular side. A disulfide bond links Cys123 and Cys200. Residues 127 to 146 (GFTVATCGIAGLWSLTVISW) traverse the membrane as a helical segment. Residues 147 to 165 (ERWVVVCKPFGNVKFDGKM) are Cytoplasmic-facing. The helical transmembrane segment at 166–189 (ATAGIVFTWVWSAVWCAPPIFGWS) threads the bilayer. Residues 190 to 215 (RYWPHGLKTSCGPDVFSGSEDPGVQS) lie on the Extracellular side of the membrane. Residues 216–243 (YMIVLMITCCFIPLGIIILCYIAVWWAI) traverse the membrane as a helical segment. Topologically, residues 244–265 (RTVAQQQKDSESTQKAEKEVSR) are cytoplasmic. A helical membrane pass occupies residues 266–289 (MVVVMIMAYCFCWGPYTFFACFAA). Over 290-297 (ANPGYAFH) the chain is Extracellular. The helical transmembrane segment at 298–322 (PLAAAMPAYFAKSATIYNPVIYVFM) threads the bilayer. The residue at position 309 (Lys309) is an N6-(retinylidene)lysine. Over 323 to 357 (NRQFRVCIMQLFGKKVDDGSEVSTSKTEVSSVAPA) the chain is Cytoplasmic.

The protein belongs to the G-protein coupled receptor 1 family. Opsin subfamily. In terms of processing, phosphorylated on some or all of the serine and threonine residues present in the C-terminal region. In terms of tissue distribution, the color pigments are found in the cone photoreceptor cells.

Its subcellular location is the membrane. In terms of biological role, visual pigments are the light-absorbing molecules that mediate vision. They consist of an apoprotein, opsin, covalently linked to cis-retinal. This chain is Red-sensitive opsin (R007), found in Psalidodon fasciatus (Banded astyanax).